The chain runs to 608 residues: MAESIIIRVQSPDGVKRITATKRETAATFLKKVAKEFGFQNNGFSVYINRNKTGEITASSNKSLNLLKIKHGDLLFLFPSSLAGPSSEMETSVPPGFKVFGAPNVVEDEIDQYLSKQDGKIYRSRDPQLCRHGPLGKCVHCVPLEPFDEDYLNHLEPPVKHMSFHAYIRKLTGGADKGKFVALENISCKIKSGCEGHLPWPNGICTKCQPSAITLNRQKYRHVDNIMFENHTVADRFLDFWRKTGNQHFGYLYGRYTEHKDIPLGIRAEVAAIYEPPQIGTQNSLELLEDPKAEVVDEIAAKLGLRKVGWIFTDLVSEDTRKGTVRYSRNKDTYFLSSEECITAGDFQNKHPNMCRLSPDGHFGSKFVTAVATGGPDNQVHFEGYQVSNQCMALVRDECLLPCKDAPELGYAKESSSEQYVPDVFYKDVDKFGNEITQLARPLPVEYLIIDITTTFPKDPVYTFSISQNPFPIENRDVLGETQDFHSLATYLSQNTSSVFLDTISDFHLLLFLVTNEVMPLQDSISLLLEAVRTRNEELAQTWKRSEQWATIEQLCSTVGGQLPGLHEYGAVGGSTHTATAAMWACQHCTFMNQPGTGHCEMCSLPRT.

Alanine 2 carries the post-translational modification N-acetylalanine. Residue lysine 179 is modified to N6-acetyllysine. The MPN domain maps to 226-363 (IMFENHTVAD…MCRLSPDGHF (138 aa)). Residues 580–608 (TAAMWACQHCTFMNQPGTGHCEMCSLPRT) form a RanBP2-type zinc finger.

Belongs to the NPL4 family. In terms of assembly, heterodimer with UFD1. The heterodimer binds ubiquitinated proteins. The heterodimer binds to VCP and inhibits Golgi membrane fusion. Interacts with ZFAND2B; probably through VCP. In terms of tissue distribution, expressed at highest levels in brain, heart, skeletal muscle, kidney and fetal liver.

It localises to the cytoplasm. The protein resides in the cytosol. Its subcellular location is the endoplasmic reticulum. The protein localises to the nucleus. It functions in the pathway protein degradation; proteasomal ubiquitin-dependent pathway. The ternary complex containing UFD1, VCP and NPLOC4 binds ubiquitinated proteins and is necessary for the export of misfolded proteins from the ER to the cytoplasm, where they are degraded by the proteasome. The NPLOC4-UFD1-VCP complex regulates spindle disassembly at the end of mitosis and is necessary for the formation of a closed nuclear envelope. Acts as a negative regulator of type I interferon production via the complex formed with VCP and UFD1, which binds to RIGI and recruits RNF125 to promote ubiquitination and degradation of RIGI. The polypeptide is Nuclear protein localization protein 4 homolog (NPLOC4) (Homo sapiens (Human)).